A 391-amino-acid chain; its full sequence is Lipid-A-disaccharide synthase (391 aa).

It belongs to the LpxB family.

The catalysed reaction is a lipid X + a UDP-2-N,3-O-bis[(3R)-3-hydroxyacyl]-alpha-D-glucosamine = a lipid A disaccharide + UDP + H(+). It participates in bacterial outer membrane biogenesis; LPS lipid A biosynthesis. Its function is as follows. Condensation of UDP-2,3-diacylglucosamine and 2,3-diacylglucosamine-1-phosphate to form lipid A disaccharide, a precursor of lipid A, a phosphorylated glycolipid that anchors the lipopolysaccharide to the outer membrane of the cell. The polypeptide is Lipid-A-disaccharide synthase (Aromatoleum aromaticum (strain DSM 19018 / LMG 30748 / EbN1) (Azoarcus sp. (strain EbN1))).